The chain runs to 291 residues: Phosphoribosylaminoimidazole-succinocarboxamide synthase (291 aa).

Belongs to the SAICAR synthetase family.

The catalysed reaction is 5-amino-1-(5-phospho-D-ribosyl)imidazole-4-carboxylate + L-aspartate + ATP = (2S)-2-[5-amino-1-(5-phospho-beta-D-ribosyl)imidazole-4-carboxamido]succinate + ADP + phosphate + 2 H(+). Its pathway is purine metabolism; IMP biosynthesis via de novo pathway; 5-amino-1-(5-phospho-D-ribosyl)imidazole-4-carboxamide from 5-amino-1-(5-phospho-D-ribosyl)imidazole-4-carboxylate: step 1/2. The sequence is that of Phosphoribosylaminoimidazole-succinocarboxamide synthase (ADE1) from Candida albicans (Yeast).